We begin with the raw amino-acid sequence, 717 residues long: Translation initiation factor eIF2B subunit epsilon (717 aa).

Residues 1–14 (MAATAAVPGAAAGR) show a composition bias toward low complexity. The segment at 1–37 (MAATAAVPGAAAGRASKRGGGGSGGGGTQGAEEEPPP) is disordered. Arg18 is subject to Omega-N-methylarginine. Gly residues predominate over residues 18–29 (RGGGGSGGGGTQ). Ser23 carries the phosphoserine modification. Residues Lys57 and Lys99 each participate in a glycyl lysine isopeptide (Lys-Gly) (interchain with G-Cter in ubiquitin) cross-link. Ser126 is modified (phosphoserine). Glycyl lysine isopeptide (Lys-Gly) (interchain with G-Cter in ubiquitin) cross-links involve residues Lys137 and Lys213. A Phosphothreonine modification is found at Thr318. Residues 442 to 479 (GSVISLHPPDAEEDEDDGQFSDDSGADQEKEKVKLKGY) are disordered. Phosphoserine occurs at positions 446, 462, and 465. A compositionally biased stretch (acidic residues) spans 452-467 (AEEDEDDGQFSDDSGA). Lys501 participates in a covalent cross-link: Glycyl lysine isopeptide (Lys-Gly) (interchain with G-Cter in ubiquitin). Residues 517 to 538 (TEEESETESEGSVDPEELDSRA) form a disordered region. Acidic residues predominate over residues 519–533 (EESETESEGSVDPEE). Ser528 and Ser536 each carry phosphoserine. One can recognise a W2 domain in the interval 539–716 (GSPQLDDIRV…REAEEESSED (178 aa)). Ser540 is modified (phosphoserine; by DYRK2). Ser713 carries the phosphoserine modification.

This sequence belongs to the eIF-2B gamma/epsilon subunits family. As to quaternary structure, component of the translation initiation factor 2B (eIF2B) complex which is a heterodecamer of two sets of five different subunits: alpha, beta, gamma, delta and epsilon. Subunits alpha, beta and delta comprise a regulatory subcomplex and subunits epsilon and gamma comprise a catalytic subcomplex. Within the complex, the hexameric regulatory complex resides at the center, with the two heterodimeric catalytic subcomplexes bound on opposite sides. In terms of processing, phosphorylated at Ser-540 by DYRK2; this is required for subsequent phosphorylation by GSK3B. Phosphorylated on serine and threonine residues by GSK3B; phosphorylation inhibits its function. Polyubiquitinated, probably by NEDD4.

The protein resides in the cytoplasm. It localises to the cytosol. With respect to regulation, activated by the chemical integrated stress response (ISR) inhibitor ISRIB which stimulates guanine nucleotide exchange factor activity for both phosphorylated and unphosphorylated eIF2. Its function is as follows. Acts as a component of the translation initiation factor 2B (eIF2B) complex, which catalyzes the exchange of GDP for GTP on eukaryotic initiation factor 2 (eIF2) gamma subunit. Its guanine nucleotide exchange factor activity is repressed when bound to eIF2 complex phosphorylated on the alpha subunit, thereby limiting the amount of methionyl-initiator methionine tRNA available to the ribosome and consequently global translation is repressed. This is Translation initiation factor eIF2B subunit epsilon (Eif2b5) from Mus musculus (Mouse).